The sequence spans 235 residues: Large ribosomal subunit protein uL1 (235 aa).

The protein belongs to the universal ribosomal protein uL1 family. As to quaternary structure, part of the 50S ribosomal subunit.

Functionally, binds directly to 23S rRNA. The L1 stalk is quite mobile in the ribosome, and is involved in E site tRNA release. Its function is as follows. Protein L1 is also a translational repressor protein, it controls the translation of the L11 operon by binding to its mRNA. This chain is Large ribosomal subunit protein uL1, found in Arthrobacter sp. (strain FB24).